The chain runs to 180 residues: Adenine phosphoribosyltransferase (180 aa).

Ser-2 bears the N-acetylserine mark. Ser-4, Ser-15, and Ser-30 each carry phosphoserine. Tyr-60 bears the Phosphotyrosine mark. A Phosphoserine modification is found at Ser-66. Residue Lys-114 is modified to N6-acetyllysine. A Phosphothreonine modification is found at Thr-135.

Belongs to the purine/pyrimidine phosphoribosyltransferase family. Homodimer.

The protein resides in the cytoplasm. The enzyme catalyses AMP + diphosphate = 5-phospho-alpha-D-ribose 1-diphosphate + adenine. It participates in purine metabolism; AMP biosynthesis via salvage pathway; AMP from adenine: step 1/1. Functionally, catalyzes a salvage reaction resulting in the formation of AMP, that is energically less costly than de novo synthesis. In Rattus norvegicus (Rat), this protein is Adenine phosphoribosyltransferase.